Consider the following 424-residue polypeptide: L-rhamnose isomerase (424 aa).

Residues H261, D293, and D295 each coordinate Mn(2+).

This sequence belongs to the rhamnose isomerase family. It depends on Mn(2+) as a cofactor.

The protein localises to the cytoplasm. The enzyme catalyses L-rhamnopyranose = L-rhamnulose. It functions in the pathway carbohydrate degradation; L-rhamnose degradation; glycerone phosphate from L-rhamnose: step 1/3. Its function is as follows. Catalyzes the interconversion of L-rhamnose and L-rhamnulose. This Bacillus subtilis (strain 168) protein is L-rhamnose isomerase.